The following is a 138-amino-acid chain: MKYILAIDFGLKKIGTAIANTLDKYPSAFHVFEVKNNFKTAVNNLFLRIKNDGYELEKIVIGFPKFHYYSDIQKAIKSFKQLLEKRFNLPIILVDESNTTSAVKDKLITMDLKHKDFKKAKDTLAAVLILERFFQNYH.

Belongs to the YqgF nuclease family.

The protein localises to the cytoplasm. Functionally, could be a nuclease involved in processing of the 5'-end of pre-16S rRNA. The polypeptide is Putative pre-16S rRNA nuclease (Mycoplasma genitalium (strain ATCC 33530 / DSM 19775 / NCTC 10195 / G37) (Mycoplasmoides genitalium)).